Reading from the N-terminus, the 607-residue chain is MIENLRNIAIIAHVDHGKTTLVDKLLQQSGTFDARAETQERVMDSNDLEKERGITILAKNTAIKWNDYRINIVDTPGHADFGGEVERVMSMVDSVLLVVDAFDGPMPQTRFVTKKAFAHGLKPIVVINKVDRPGARPDWVVDQVFDLFVNLDATDEQLDFPIIYASALNGIAGLDHEDMAEDMTPLYQAIVDHVPAPDVDLDGPLQMQISQLDYNNYVGVIGIGRIKRGKVKPNQQVTIIDSEGKTRNAKVGKVLTHLGLERIDSNIAEAGDIIAITGLGELNISDTICDPQNVEALPALSVDEPTVSMFFCVNTSPFCGKEGKFVTSRQILDRLNKELVHNVALRVEETEDADAFRVSGRGELHLSVLIENMRREGFELAVSRPKVIFREIDGRKQEPYENVTLDVEEQHQGSVMQALGERKGDLKNMNPDGKGRVRLDYVIPSRGLIGFRSEFMTMTSGTGLLYSTFSHYDDIRPGEVGQRQNGVLISNGQGKAVAFALFGLQDRGKLFLGHGAEVYEGQIIGIHSRSNDLTVNCLTGKKLTNMRASGTDEAVILVPPIKMSLEQALEFIDDDELVEVTPTSIRIRKRHLTENDRRRANRGQKEE.

The region spanning 3–198 (ENLRNIAIIA…AIVDHVPAPD (196 aa)) is the tr-type G domain. Residues 15-20 (DHGKTT) and 128-131 (NKVD) contribute to the GTP site. A C-terminal domain (CTD), required but not sufficient to bind 70S or 30S ribosomes region spans residues 481–607 (GQRQNGVLIS…RRANRGQKEE (127 aa)).

Belongs to the TRAFAC class translation factor GTPase superfamily. Classic translation factor GTPase family. BipA subfamily. As to quaternary structure, monomer.

The protein localises to the cytoplasm. It catalyses the reaction GTP + H2O = GDP + phosphate + H(+). Ribosome-associated GTPase is not affected by low levels of ppGpp, &gt;40 uM ppGpp and &gt;50 uM GDP inhibit GTPase. The C-terminus (residues 387-607 or 481-607) inhibits GTPase activity, in its absence kcat increases, but GTPase is no longer stimulated by 70S ribosome or 30S or 50S subunits. A 50S ribosomal subunit assembly protein with GTPase activity, required for 50S subunit assembly at low temperatures, may also play a role in translation. Binds GTP and analogs. Binds the 70S ribosome between the 30S and 50S subunits, in a similar position as ribosome-bound EF-G; it contacts a number of ribosomal proteins, both rRNAs and the A-site tRNA. A ribosome-stimulated GTPase, GTPase activity increases 4 fold in the presence of 70S ribosomes. Binds 70S ribosomes in the presence of GTP or its non-hydrolyzable analog GMPPNP; in the presence of ppGpp or under stress conditions it binds to 30S ribosomal subunits. The protein is Large ribosomal subunit assembly factor BipA of Salmonella typhimurium (strain LT2 / SGSC1412 / ATCC 700720).